The following is a 492-amino-acid chain: Phosphatidylglycerol--prolipoprotein diacylglyceryl transferase (492 aa).

Transmembrane regions (helical) follow at residues 40–60 (IFGI…YVGW), 72–92 (AIRQ…VVVP), 106–126 (VAVR…VGLA), 133–153 (AGLG…GGLL), 184–204 (QGGL…LIAL), 214–234 (IGDV…LGCL), 361–381 (VWGT…VLLI), 409–429 (GVLM…LEWI), and 441–461 (LSIS…TLFI). Arg230 is a binding site for a 1,2-diacyl-sn-glycero-3-phospho-(1'-sn-glycerol).

The protein belongs to the Lgt family.

Its subcellular location is the cell inner membrane. The catalysed reaction is L-cysteinyl-[prolipoprotein] + a 1,2-diacyl-sn-glycero-3-phospho-(1'-sn-glycerol) = an S-1,2-diacyl-sn-glyceryl-L-cysteinyl-[prolipoprotein] + sn-glycerol 1-phosphate + H(+). It participates in protein modification; lipoprotein biosynthesis (diacylglyceryl transfer). Its function is as follows. Catalyzes the transfer of the diacylglyceryl group from phosphatidylglycerol to the sulfhydryl group of the N-terminal cysteine of a prolipoprotein, the first step in the formation of mature lipoproteins. The protein is Phosphatidylglycerol--prolipoprotein diacylglyceryl transferase of Rhodopirellula baltica (strain DSM 10527 / NCIMB 13988 / SH1).